Consider the following 437-residue polypeptide: Adenylosuccinate synthetase (437 aa).

GTP is bound by residues 13 to 19 (GDEGKGK) and 41 to 43 (GHT). Asp-14 (proton acceptor) is an active-site residue. Mg(2+) contacts are provided by Asp-14 and Gly-41. Residues 14-17 (DEGK), 39-42 (NAGH), Thr-130, Arg-144, Gln-225, Thr-240, and Arg-310 each bind IMP. His-42 functions as the Proton donor in the catalytic mechanism. 306-312 (ATTGRLR) provides a ligand contact to substrate. Residues Arg-312, 338–340 (KLD), and 421–423 (STG) contribute to the GTP site.

The protein belongs to the adenylosuccinate synthetase family. Homodimer. Mg(2+) is required as a cofactor.

It is found in the cytoplasm. It carries out the reaction IMP + L-aspartate + GTP = N(6)-(1,2-dicarboxyethyl)-AMP + GDP + phosphate + 2 H(+). Its pathway is purine metabolism; AMP biosynthesis via de novo pathway; AMP from IMP: step 1/2. In terms of biological role, plays an important role in the de novo pathway of purine nucleotide biosynthesis. Catalyzes the first committed step in the biosynthesis of AMP from IMP. This is Adenylosuccinate synthetase from Psychromonas ingrahamii (strain DSM 17664 / CCUG 51855 / 37).